Reading from the N-terminus, the 190-residue chain is MKRLISCLTIICALNASAAAETTSNPCSRWISFLKPVCQRIHQTWAEGHDDMYFSGYAWHNRYVYSNEKIKSYNETAWGGGLGKSLFDEKGNWHGLYAIAFLDSHRHLEPAVGYAYLKTASVNKDLKAGLGYSVLVTSRVDYDNVPIPGALPWAALFYKRITIAATYIPGSSREGHENGNVLYMLGKISL.

The signal sequence occupies residues 1–18; the sequence is MKRLISCLTIICALNASA. Active-site residues include histidine 60, aspartate 103, and serine 104.

It belongs to the lipid A palmitoyltransferase family. In terms of assembly, homodimer.

Its subcellular location is the cell outer membrane. The enzyme catalyses a lipid A + a 1,2-diacyl-sn-glycero-3-phosphocholine = a hepta-acyl lipid A + a 2-acyl-sn-glycero-3-phosphocholine. It carries out the reaction a lipid IVA + a 1,2-diacyl-sn-glycero-3-phosphocholine = a lipid IVB + a 2-acyl-sn-glycero-3-phosphocholine. The catalysed reaction is a lipid IIA + a 1,2-diacyl-sn-glycero-3-phosphocholine = a lipid IIB + a 2-acyl-sn-glycero-3-phosphocholine. Functionally, transfers a fatty acid residue from the sn-1 position of a phospholipid to the N-linked hydroxyfatty acid chain on the proximal unit of lipid A or its precursors. The chain is Lipid A acyltransferase PagP from Legionella pneumophila serogroup 1 (strain 2300/99 Alcoy).